The sequence spans 786 residues: LPS-assembly protein LptD (786 aa).

The signal sequence occupies residues 1 to 39 (MPPKPLFPNVFPGDGAPRKRRLALALLAVPGLVPAVSYA). The tract at residues 767-786 (PGYTPLPPPPPPMSRFSNYE) is disordered. Residues 770–779 (TPLPPPPPPM) are compositionally biased toward pro residues.

It belongs to the LptD family. As to quaternary structure, component of the lipopolysaccharide transport and assembly complex. Interacts with LptE and LptA.

Its subcellular location is the cell outer membrane. In terms of biological role, together with LptE, is involved in the assembly of lipopolysaccharide (LPS) at the surface of the outer membrane. This is LPS-assembly protein LptD from Burkholderia lata (strain ATCC 17760 / DSM 23089 / LMG 22485 / NCIMB 9086 / R18194 / 383).